Consider the following 347-residue polypeptide: S-adenosylmethionine:tRNA ribosyltransferase-isomerase (347 aa).

Belongs to the QueA family. As to quaternary structure, monomer.

It is found in the cytoplasm. It catalyses the reaction 7-aminomethyl-7-carbaguanosine(34) in tRNA + S-adenosyl-L-methionine = epoxyqueuosine(34) in tRNA + adenine + L-methionine + 2 H(+). The protein operates within tRNA modification; tRNA-queuosine biosynthesis. In terms of biological role, transfers and isomerizes the ribose moiety from AdoMet to the 7-aminomethyl group of 7-deazaguanine (preQ1-tRNA) to give epoxyqueuosine (oQ-tRNA). The chain is S-adenosylmethionine:tRNA ribosyltransferase-isomerase from Xylella fastidiosa (strain 9a5c).